The following is a 353-amino-acid chain: Photosystem II D2 protein (353 aa).

Threonine 2 bears the N-acetylthreonine mark. Position 2 is a phosphothreonine (threonine 2). The helical transmembrane segment at 41 to 61 threads the bilayer; it reads CAYFALGGWFTGTTFVTSWYT. Histidine 118 lines the chlorophyll a pocket. Residues 125-141 form a helical membrane-spanning segment; the sequence is GFMLRQFELARSVQLRP. Pheophytin a-binding residues include glutamine 130 and asparagine 143. Residues 153–166 traverse the membrane as a helical segment; the sequence is VFVSVFLIYPLGQS. Histidine 198 is a chlorophyll a binding site. Residues 208–228 form a helical membrane-spanning segment; it reads AALLCAIHGATVENTLFEDGD. The a plastoquinone site is built by histidine 215 and phenylalanine 262. Histidine 215 contributes to the Fe cation binding site. Fe cation is bound at residue histidine 269. The chain crosses the membrane as a helical span at residues 279 to 295; the sequence is GLWMSALGVVGLALNLR.

The protein belongs to the reaction center PufL/M/PsbA/D family. PSII is composed of 1 copy each of membrane proteins PsbA, PsbB, PsbC, PsbD, PsbE, PsbF, PsbH, PsbI, PsbJ, PsbK, PsbL, PsbM, PsbT, PsbX, PsbY, PsbZ, Psb30/Ycf12, at least 3 peripheral proteins of the oxygen-evolving complex and a large number of cofactors. It forms dimeric complexes. The D1/D2 heterodimer binds P680, chlorophylls that are the primary electron donor of PSII, and subsequent electron acceptors. It shares a non-heme iron and each subunit binds pheophytin, quinone, additional chlorophylls, carotenoids and lipids. There is also a Cl(-1) ion associated with D1 and D2, which is required for oxygen evolution. The PSII complex binds additional chlorophylls, carotenoids and specific lipids. is required as a cofactor.

It localises to the plastid. The protein localises to the chloroplast thylakoid membrane. It catalyses the reaction 2 a plastoquinone + 4 hnu + 2 H2O = 2 a plastoquinol + O2. Its function is as follows. Photosystem II (PSII) is a light-driven water:plastoquinone oxidoreductase that uses light energy to abstract electrons from H(2)O, generating O(2) and a proton gradient subsequently used for ATP formation. It consists of a core antenna complex that captures photons, and an electron transfer chain that converts photonic excitation into a charge separation. The D1/D2 (PsbA/PsbD) reaction center heterodimer binds P680, the primary electron donor of PSII as well as several subsequent electron acceptors. D2 is needed for assembly of a stable PSII complex. This chain is Photosystem II D2 protein, found in Populus trichocarpa (Western balsam poplar).